The primary structure comprises 503 residues: Cytochrome P450 3A9 (503 aa).

Cys442 lines the heme pocket.

Belongs to the cytochrome P450 family. The cofactor is heme. Mainly expressed in olfactory epithelium.

The protein localises to the endoplasmic reticulum membrane. Its subcellular location is the microsome membrane. It carries out the reaction an organic molecule + reduced [NADPH--hemoprotein reductase] + O2 = an alcohol + oxidized [NADPH--hemoprotein reductase] + H2O + H(+). This isozyme seems to be implicated in olfaction. Active in the demethylation of erythromycin as well as benzphetamine. The polypeptide is Cytochrome P450 3A9 (Cyp3a9) (Rattus norvegicus (Rat)).